A 522-amino-acid polypeptide reads, in one-letter code: Amine oxidase [flavin-containing] (522 aa).

Residues 1–492 (MTAQNTFDVI…FWERNLPSVG (492 aa)) are Cytoplasmic-facing. Cys399 is modified (S-8alpha-FAD cysteine). Residues 493–513 (GFINFLAASVLSVATAAGMLA) traverse the membrane as a helical; Anchor for type IV membrane protein segment. Over 514–522 (YQKGLLTRS) the chain is Mitochondrial intermembrane.

This sequence belongs to the flavin monoamine oxidase family. The cofactor is FAD.

The protein localises to the mitochondrion outer membrane. The enzyme catalyses a secondary aliphatic amine + O2 + H2O = a primary amine + an aldehyde + H2O2. Functionally, catalyzes the oxidative deamination of biogenic and xenobiotic amines and has important functions in the metabolism of neuroactive and vasoactive amines in the central nervous system and peripheral tissues. Oxidizes both 5-hydroxytryptamine (5-HT) and beta-phenylethylamine (PEA). The protein is Amine oxidase [flavin-containing] (mao) of Oncorhynchus mykiss (Rainbow trout).